The chain runs to 334 residues: 5-formaminoimidazole-4-carboxamide-1-(beta)-D-ribofuranosyl 5'-monophosphate synthetase (334 aa).

S10, H11, S71, and H75 together coordinate 5-amino-1-(5-phospho-beta-D-ribosyl)imidazole-4-carboxamide. Residues 78–325 enclose the ATP-grasp domain; the sequence is IELVENMKVP…IAMEIREAIE (248 aa). ATP contacts are provided by residues 132-142, 173-176, and E204; these read KPHGAKGGKGY and QEYV. N232 serves as a coordination point for 5-amino-1-(5-phospho-beta-D-ribosyl)imidazole-4-carboxamide. Mg(2+) contacts are provided by E270 and E283.

This sequence belongs to the phosphohexose mutase family. As to quaternary structure, homotrimer and homohexamer. Requires Mg(2+) as cofactor. Mn(2+) is required as a cofactor.

It catalyses the reaction 5-amino-1-(5-phospho-beta-D-ribosyl)imidazole-4-carboxamide + formate + ATP = 5-formamido-1-(5-phospho-D-ribosyl)imidazole-4-carboxamide + ADP + phosphate. Its pathway is purine metabolism; IMP biosynthesis via de novo pathway; 5-formamido-1-(5-phospho-D-ribosyl)imidazole-4-carboxamide from 5-amino-1-(5-phospho-D-ribosyl)imidazole-4-carboxamide (formate route): step 1/1. In terms of biological role, catalyzes the ATP- and formate-dependent formylation of 5-aminoimidazole-4-carboxamide-1-beta-d-ribofuranosyl 5'-monophosphate (AICAR) to 5-formaminoimidazole-4-carboxamide-1-beta-d-ribofuranosyl 5'-monophosphate (FAICAR) in the absence of folates. This chain is 5-formaminoimidazole-4-carboxamide-1-(beta)-D-ribofuranosyl 5'-monophosphate synthetase, found in Pyrococcus furiosus (strain ATCC 43587 / DSM 3638 / JCM 8422 / Vc1).